The sequence spans 267 residues: Interleukin-15 receptor subunit alpha (267 aa).

Positions 1 to 30 (MAPRRARGCRTLGLPALLLLLLLRPPATRG) are cleaved as a signal peptide. The 65-residue stretch at 31–95 (ITCPPPMSVE…WTTPSLKCIR (65 aa)) folds into the Sushi domain. Residues 31–205 (ITCPPPMSVE…VYPQGHSDTT (175 aa)) are Extracellular-facing. 2 cysteine pairs are disulfide-bonded: Cys-33–Cys-75 and Cys-59–Cys-93. The segment at 102 to 178 (QRPAPPSTVT…ESSHGTPSQT (77 aa)) is disordered. The span at 108-124 (STVTTAGVTPQPESLSP) shows a compositional bias: polar residues. Over residues 129 to 145 (PAASSPSSNNTAATTAA) the composition is skewed to low complexity. N-linked (GlcNAc...) asparagine glycosylation occurs at Asn-137. The segment covering 152-165 (LMPSKSPSTGTTEI) has biased composition (polar residues). A helical membrane pass occupies residues 206–228 (VAISTSTVLLCGLSAVSLLACYL). Over 229-267 (KSRQTPPLASVEMEAMEALPVTWGTSSRDEDLENCSHHL) the chain is Cytoplasmic.

As to quaternary structure, the interleukin-15 receptor IL15R is a heterotrimer of IL15RA, IL2RB and IL2RG. IL15RA also self-associates. Interacts with SYK. N-glycosylated and O-glycosylated. Post-translationally, a soluble form (sIL-15RA) arises from proteolytic shedding of the membrane-anchored receptor. It also binds IL-15 and thus interferes with IL-15 binding to the membrane receptor. As to expression, expressed in neutrophils (at protein level). Expressed in fetal brain with higher expression in the hippocampus and cerebellum than in cortex and thalamus. Higher levels of soluble sIL-15RA form in comparison with membrane-bound forms is present in all brain structures. Isoforms 1, 3, 4, 5, 6, 7, 8 and 9: Widely expressed.

The protein resides in the membrane. Its subcellular location is the nucleus membrane. The protein localises to the cell surface. It localises to the endoplasmic reticulum membrane. It is found in the golgi apparatus membrane. The protein resides in the cytoplasmic vesicle membrane. Its subcellular location is the secreted. The protein localises to the extracellular space. Functionally, high-affinity receptor for interleukin-15. Can signal both in cis and trans where IL15R from one subset of cells presents IL15 to neighboring IL2RG-expressing cells. In neutrophils, binds and activates kinase SYK in response to IL15 stimulation. In neutrophils, required for IL15-induced phagocytosis in a SYK-dependent manner. Expression of different isoforms may alter or interfere with signal transduction. Does not bind IL15. The sequence is that of Interleukin-15 receptor subunit alpha (IL15RA) from Homo sapiens (Human).